The primary structure comprises 778 residues: Molybdenum cofactor sulfurase (778 aa).

Position 235 is an N6-(pyridoxal phosphate)lysine (Lys-235). Residue Cys-399 is part of the active site. 2 disordered regions span residues 576 to 596 (LSKNPSLFRSSSSRSRSSRVC) and 654 to 673 (ARPALPGSFPPSPPDSDTEK). The span at 584–594 (RSSSSRSRSSR) shows a compositional bias: low complexity. The 128-residue stretch at 651–778 (LPTARPALPG…ETAERARSRL (128 aa)) folds into the MOSC domain.

This sequence belongs to the class-V pyridoxal-phosphate-dependent aminotransferase family. MOCOS subfamily. Pyridoxal 5'-phosphate serves as cofactor.

The enzyme catalyses Mo-molybdopterin + L-cysteine + AH2 = thio-Mo-molybdopterin + L-alanine + A + H2O. It functions in the pathway cofactor biosynthesis; molybdopterin biosynthesis. In terms of biological role, sulfurates the molybdenum cofactor. Sulfation of molybdenum is essential for xanthine dehydrogenase (XDH) and aldehyde oxidase (ADO) enzymes in which molybdenum cofactor is liganded by 1 oxygen and 1 sulfur atom in active form. The protein is Molybdenum cofactor sulfurase of Chaetomium globosum (strain ATCC 6205 / CBS 148.51 / DSM 1962 / NBRC 6347 / NRRL 1970) (Soil fungus).